Here is a 139-residue protein sequence, read N- to C-terminus: ATP synthase epsilon chain (139 aa).

This sequence belongs to the ATPase epsilon chain family. F-type ATPases have 2 components, CF(1) - the catalytic core - and CF(0) - the membrane proton channel. CF(1) has five subunits: alpha(3), beta(3), gamma(1), delta(1), epsilon(1). CF(0) has three main subunits: a, b and c.

The protein resides in the cell inner membrane. Functionally, produces ATP from ADP in the presence of a proton gradient across the membrane. The chain is ATP synthase epsilon chain from Acinetobacter baylyi (strain ATCC 33305 / BD413 / ADP1).